The primary structure comprises 389 residues: MYGRPQAEMEQEAGELSRWQAAHQAAQDNENSAPILNMSSSSGSSGVHTSWNQGLPSIQHFPHSAEMLGSPLVSVEAPGQNVNEGGPQFSMPLPERGMSYCPQATLTPSRMIYCQRMSPPQQEMTIFSGPQLMPVGEPNIPRVARPFGGNLRMPPNGLPVSASTGIPIMSHTGNPPVPYPGLSTVPSDETLLGPTVPSTEAQAVLPSMAQMLPPQDAHDLGMPPAESQSLLVLGSQDSLVSQPDSQEGPFLPEQPGPAPQTVEKNSRPQEGTGRRGSSEARPYCCNYENCGKAYTKRSHLVSHQRKHTGERPYSCNWESCSWSFFRSDELRRHMRVHTRYRPYKCDQCSREFMRSDHLKQHQKTHRPGPSDPQANNNNGEQDSPPAAGP.

Disordered stretches follow at residues 1–48 and 239–279; these read MYGR…SGVH and LVSQ…GSSE. Residues 26–38 are compositionally biased toward polar residues; that stretch reads AQDNENSAPILNM. Positions 264–278 are enriched in basic and acidic residues; sequence KNSRPQEGTGRRGSS. C2H2-type zinc fingers lie at residues 283 to 307, 313 to 337, and 343 to 365; these read YCCN…QRKH, YSCN…MRVH, and YKCD…QKTH. Residues 356–389 form a disordered region; that stretch reads DHLKQHQKTHRPGPSDPQANNNNGEQDSPPAAGP. The segment covering 372 to 381 has biased composition (polar residues); that stretch reads PQANNNNGEQ.

Belongs to the Sp1 C2H2-type zinc-finger protein family.

The protein localises to the nucleus. Its function is as follows. Transcription repressor that binds to the promoter of target genes and prevents their expression. Acts as a negative regulator of epithelial-mesenchymal transition and metastasis in breast cancer. Specifically binds the 5'-CACCC-3' sequence in the promoter of ID1, a key metastasis regulator in breast cancer, and repress its expression. May be a germ cell-specific transcription factor that plays important roles in spermatid differentiation and oocyte development. The sequence is that of Krueppel-like factor 17 (KLF17) from Homo sapiens (Human).